The primary structure comprises 190 residues: TATA box-binding protein-like 1 (190 aa).

The protein belongs to the TBP family. In terms of assembly, binds TFIIA and TFIIB.

It localises to the cytoplasm. The protein localises to the nucleus. Functionally, part of a specialized transcription system that mediates the transcription of most ribosomal proteins through the 5'-TCT-3' motif which is a core promoter element at these genes. Seems to also mediate the transcription of NF1. Does not bind the TATA box. In Pongo abelii (Sumatran orangutan), this protein is TATA box-binding protein-like 1 (TBPL1).